Here is a 132-residue protein sequence, read N- to C-terminus: Small ribosomal subunit protein uS8 (132 aa).

The protein belongs to the universal ribosomal protein uS8 family. Part of the 30S ribosomal subunit. Contacts proteins S5 and S12.

One of the primary rRNA binding proteins, it binds directly to 16S rRNA central domain where it helps coordinate assembly of the platform of the 30S subunit. This chain is Small ribosomal subunit protein uS8, found in Paenarthrobacter aurescens (strain TC1).